A 371-amino-acid chain; its full sequence is MSIDDKVRAIVKEFKAYVPGKSKEEIARNYGIDPEKIIKLGSNENPWGCSPKIAEKLMDEVSKLHQYPQPINPELMDEISKFTKMPVENIIVGGDGADEVIDNIMRILIDEGDEVIIPIPTFTQYAISAKIHGANIKWAKFDEENEFKLDIESVLNNITEKTKAIFLCTPNNPTGNVIPTEDIKKIVESTDALVMIDHAYIEYSNEDYDLTDWALKYDNVLVLRTFSKVFGLAGQRVGYGVTSKKIVDYMMRIKPIFSLTRASQASAITALQDKEFFEKCLNEGIESREEIYNGLKKFKQLEVYPTEANYMLVKVKNGMNSSEFCEVLLKKGVIVRDCYSFEGLEPYYFRVSIGTFDENERFLKIMSEVVE.

An N6-(pyridoxal phosphate)lysine modification is found at K228.

It belongs to the class-II pyridoxal-phosphate-dependent aminotransferase family. Histidinol-phosphate aminotransferase subfamily. Requires pyridoxal 5'-phosphate as cofactor.

It catalyses the reaction L-histidinol phosphate + 2-oxoglutarate = 3-(imidazol-4-yl)-2-oxopropyl phosphate + L-glutamate. It functions in the pathway amino-acid biosynthesis; L-histidine biosynthesis; L-histidine from 5-phospho-alpha-D-ribose 1-diphosphate: step 7/9. The sequence is that of Histidinol-phosphate aminotransferase from Methanococcus maripaludis (strain C7 / ATCC BAA-1331).